Reading from the N-terminus, the 352-residue chain is MEGISIYTSDNYTEEMGSGDYDSMKEPCFREENANFNKIFLPTIYSIIFLTGIVGNGLVILVMGYQKKLRSMTDKYRLHLSVADLLFVITLPFWAVDAVANWYFGNFLCKAVHVIYTVNLYSSVLILAFISLDRYLAIVHATNSQRPRKLLAEKVVYVGVWIPALLLTIPDFIFANVSEADDRYICDRFYPNDLWVVVFQFQHIMVGLILPGIVILSCYCIIISKLSHSKGHQKRKALKTTVILILAFFACWLPYYIGISIDSFILLEIIKQGCEFENTVHKWISITEALAFFHCCLNPILYAFLGAKFKTSAQHALTSVSRGSSLKILSKGKRGGHSSVSTESESSSFHSS.

The segment at 1–21 (MEGISIYTSDNYTEEMGSGDY) is important for chemokine binding and signaling. Topologically, residues 1–38 (MEGISIYTSDNYTEEMGSGDYDSMKEPCFREENANFNK) are extracellular. Tyr-7 carries the post-translational modification Sulfotyrosine. Asn-11 carries an N-linked (GlcNAc...) asparagine glycan. Tyr-12 carries the post-translational modification Sulfotyrosine. Ser-18 carries an O-linked (Xyl...) (chondroitin sulfate) serine glycan. Position 21 is a sulfotyrosine (Tyr-21). Cystine bridges form between Cys-28-Cys-274 and Cys-109-Cys-186. Residues 39–63 (IFLPTIYSIIFLTGIVGNGLVILVM) traverse the membrane as a helical segment. Residues 64-77 (GYQKKLRSMTDKYR) are Cytoplasmic-facing. A helical transmembrane segment spans residues 78–99 (LHLSVADLLFVITLPFWAVDAV). The tract at residues 94–97 (WAVD) is chemokine binding. At 100–110 (ANWYFGNFLCK) the chain is on the extracellular side. A helical transmembrane segment spans residues 111-130 (AVHVIYTVNLYSSVLILAFI). The tract at residues 113-117 (HVIYT) is chemokine binding. The Cytoplasmic segment spans residues 131–154 (SLDRYLAIVHATNSQRPRKLLAEK). Positions 133 to 135 (DRY) match the Important for signaling motif. Residues 135–147 (YLAIVHATNSQRP) are involved in dimerization; when bound to chemokine. The chain crosses the membrane as a helical span at residues 155 to 174 (VVYVGVWIPALLLTIPDFIF). At 175–195 (ANVSEADDRYICDRFYPNDLW) the chain is on the extracellular side. Residues 186 to 190 (CDRFY) form a chemokine binding, important for signaling region. The involved in dimerization stretch occupies residues 191 to 210 (PNDLWVVVFQFQHIMVGLIL). The helical transmembrane segment at 196-216 (VVVFQFQHIMVGLILPGIVIL) threads the bilayer. Residues 217–241 (SCYCIIISKLSHSKGHQKRKALKTT) are Cytoplasmic-facing. Residues 242–261 (VILILAFFACWLPYYIGISI) traverse the membrane as a helical segment. At 262–282 (DSFILLEIIKQGCEFENTVHK) the chain is on the extracellular side. Residues 266 to 268 (LLE) form an involved in dimerization region. The chain crosses the membrane as a helical span at residues 283–302 (WISITEALAFFHCCLNPILY). Topologically, residues 303 to 352 (AFLGAKFKTSAQHALTSVSRGSSLKILSKGKRGGHSSVSTESESSSFHSS) are cytoplasmic. 2 positions are modified to phosphoserine: Ser-319 and Ser-321. Phosphoserine; by PKC and GRK6 is present on residues Ser-324 and Ser-325. A disordered region spans residues 329–352 (LSKGKRGGHSSVSTESESSSFHSS). Position 330 is a phosphoserine; by GRK6 (Ser-330). A Glycyl lysine isopeptide (Lys-Gly) (interchain with G-Cter in ubiquitin) cross-link involves residue Lys-331. Residues 337 to 352 (HSSVSTESESSSFHSS) show a composition bias toward low complexity. Ser-339 is modified (phosphoserine; by GRK6). Phosphoserine is present on residues Ser-348 and Ser-351.

This sequence belongs to the G-protein coupled receptor 1 family. Monomer. Can form homodimers. Interacts with CD164. Interacts with ARRB2; the interaction is dependent on the C-terminal phosphorylation of CXCR4 and allows activation of MAPK1 and MAPK3. Interacts with ARR3; the interaction is dependent on the C-terminal phosphorylation of CXCR4 and modulates calcium mobilization. Interacts with RNF113A; the interaction, enhanced by CXCL12, promotes CXCR4 ubiquitination and subsequent degradation. Interacts (via the cytoplasmic C-terminal) with ITCH (via the WW domains I and II); the interaction, enhanced by CXCL12, promotes CXCR4 ubiquitination and leads to its degradation. Interacts with extracellular ubiquitin. Interacts with DBN1; this interaction is enhanced by antigenic stimulation. Following LPS binding, may form a complex with GDF5, HSP90AA1 and HSPA8. In terms of processing, phosphorylated on agonist stimulation. Rapidly phosphorylated on serine and threonine residues in the C-terminal. Phosphorylation at Ser-324 and Ser-325 leads to recruitment of ITCH, ubiquitination and protein degradation. Post-translationally, ubiquitinated after ligand binding, leading to its degradation. Ubiquitinated by ITCH at the cell membrane on agonist stimulation. The ubiquitin-dependent mechanism, endosomal sorting complex required for transport (ESCRT), then targets CXCR4 for lysosomal degradation. This process is dependent also on prior Ser-/Thr-phosphorylation in the C-terminal of CXCR4. Also binding of ARRB1 to STAM negatively regulates CXCR4 sorting to lysosomes though modulating ubiquitination of SFR5S. Sulfation is required for efficient binding of CXCL12/SDF-1alpha and promotes its dimerization. In terms of processing, O- and N-glycosylated. N-glycosylation can mask coreceptor function. The O-glycosylation chondroitin sulfate attachment does not affect interaction with CXCL12/SDF-1alpha nor its coreceptor activity.

The protein resides in the cell membrane. The protein localises to the cell junction. Its subcellular location is the early endosome. It localises to the late endosome. It is found in the lysosome. Receptor for the C-X-C chemokine CXCL12/SDF-1 that transduces a signal by increasing intracellular calcium ion levels and enhancing MAPK1/MAPK3 activation. Involved in the AKT signaling cascade. Plays a role in regulation of cell migration, e.g. during wound healing. Acts as a receptor for extracellular ubiquitin; leading to enhanced intracellular calcium ions and reduced cellular cAMP levels. Binds bacterial lipopolysaccharide (LPS) et mediates LPS-induced inflammatory response, including TNF secretion by monocytes. Involved in hematopoiesis and in cardiac ventricular septum formation. Also plays an essential role in vascularization of the gastrointestinal tract, probably by regulating vascular branching and/or remodeling processes in endothelial cells. Involved in cerebellar development. In the CNS, could mediate hippocampal-neuron survival. The chain is C-X-C chemokine receptor type 4 (CXCR4) from Pan troglodytes (Chimpanzee).